The primary structure comprises 154 residues: Transcriptional repressor NrdR (154 aa).

A zinc finger lies at 3-34 (CPFCGANDTKVIDSRLVAEGEQVRRRRECVAC). One can recognise an ATP-cone domain in the interval 49–139 (PRLIKQDGTR…VYRRFQDLDE (91 aa)).

It belongs to the NrdR family. Zn(2+) serves as cofactor.

Negatively regulates transcription of bacterial ribonucleotide reductase nrd genes and operons by binding to NrdR-boxes. The sequence is that of Transcriptional repressor NrdR from Pseudomonas entomophila (strain L48).